A 262-amino-acid chain; its full sequence is Ornithine carbamoyltransferase (262 aa).

Carbamoyl phosphate is bound by residues 3-7, Gln30, Arg54, and 81-84; these read STRTR and HPTQ. L-ornithine contacts are provided by residues Asn114, Asp178, and 182–183; that span reads SM. Residues 219 to 222 and Thr247 each bind carbamoyl phosphate; that span reads HCLP.

The protein belongs to the aspartate/ornithine carbamoyltransferase superfamily. OTCase family.

The protein localises to the cytoplasm. The catalysed reaction is carbamoyl phosphate + L-ornithine = L-citrulline + phosphate + H(+). It participates in amino-acid biosynthesis; L-arginine biosynthesis; L-arginine from L-ornithine and carbamoyl phosphate: step 1/3. Reversibly catalyzes the transfer of the carbamoyl group from carbamoyl phosphate (CP) to the N(epsilon) atom of ornithine (ORN) to produce L-citrulline. This is Ornithine carbamoyltransferase (argF) from Neisseria lactamica.